We begin with the raw amino-acid sequence, 835 residues long: Leucine--tRNA ligase (835 aa).

Positions 41 to 52 match the 'HIGH' region motif; it reads PYPSGQGLHVGH. The short motif at 611–615 is the 'KMSKS' region element; the sequence is KMSKS. Residue K614 coordinates ATP.

The protein belongs to the class-I aminoacyl-tRNA synthetase family.

It is found in the cytoplasm. It catalyses the reaction tRNA(Leu) + L-leucine + ATP = L-leucyl-tRNA(Leu) + AMP + diphosphate. The protein is Leucine--tRNA ligase of Elusimicrobium minutum (strain Pei191).